The following is a 232-amino-acid chain: uncharacterized protein (232 aa).

This is an uncharacterized protein from Eriophyes pyri (pearleaf blister mite).